A 627-amino-acid polypeptide reads, in one-letter code: Zinc cluster transcription factor acuM (627 aa).

6 disordered regions span residues 1–40 (MGCRKSSCPRHHTPKAGTFPPRWFPSAEEPGKKGGQPARP), 129–148 (NGTAQTGTVPVEQPRNGTME), 155–193 (AEGDSSRMESGSKNTASPPVKADNNAAGTHSSPKKRRKV), 225–258 (CHDEPREPSKRARSEHEHSTAEEDGHSNNEFSNA), 277–305 (PDGTVALPPSSVSAVQHNTIPSSSAQNSL), and 394–416 (AQPSQPTQSQPHQNDSVQGPSST). Over residues 162–171 (MESGSKNTAS) the composition is skewed to polar residues. The segment at residues 197 to 225 (CVYCRRSHMTCDSERPCTRCIKRNIGHLC) is a DNA-binding region (zn(2)-C6 fungal-type). Positions 225–251 (CHDEPREPSKRARSEHEHSTAEEDGHS) are enriched in basic and acidic residues. Polar residues predominate over residues 286-305 (SSVSAVQHNTIPSSSAQNSL). The span at 394–403 (AQPSQPTQSQ) shows a compositional bias: low complexity. Over residues 404–416 (PHQNDSVQGPSST) the composition is skewed to polar residues.

The protein localises to the nucleus. Functionally, transcription factor that governs genes involved in reductive and siderophore-mediated iron acquisition, and carbon metabolism. Suppresses the expression of sreA and induces hapX to stimulate expression of genes involved in both reductive iron assimilation and siderophore-mediated iron uptake which is essential for the maximal virulence. Also regulates genes involved in gluconeogenesis. The chain is Zinc cluster transcription factor acuM from Aspergillus fumigatus (strain ATCC MYA-4609 / CBS 101355 / FGSC A1100 / Af293) (Neosartorya fumigata).